The sequence spans 189 residues: MDTEYEQVNKPWNELYKETTLGNKLTVNVGMEDQEVPLLPSNFLTKVRVGLSGGYITMRRIRIKIIPLVSRKAGVSGKLYLRDISDTTGRKLHCTESLDLGQEIRLTMQHLDFSVSTRSDVPIVFGFEELVSPFLEGRELFSISVRWQFGLSKNCYSLPQSKWKVMYQEDALKVLKPSKKKASKTDSSV.

The protein belongs to the tombusvirus/aureusvirus movement protein p22 family. Interacts with host protein HFI22. Post-translationally, phosphorylated.

Its subcellular location is the host membrane. Its function is as follows. Cell-to-cell movement. Displays RNA-binding activity. The chain is Movement protein p22 from Capsicum annuum (Capsicum pepper).